The primary structure comprises 121 residues: Cell division protein FtsL (121 aa).

Residues Met-1–Arg-34 are Cytoplasmic-facing. A helical transmembrane segment spans residues Phe-35–Ala-57. The Periplasmic portion of the chain corresponds to His-58–Lys-121.

It belongs to the FtsL family. Part of a complex composed of FtsB, FtsL and FtsQ.

The protein localises to the cell inner membrane. Its function is as follows. Essential cell division protein. May link together the upstream cell division proteins, which are predominantly cytoplasmic, with the downstream cell division proteins, which are predominantly periplasmic. This is Cell division protein FtsL from Salmonella typhimurium (strain LT2 / SGSC1412 / ATCC 700720).